We begin with the raw amino-acid sequence, 154 residues long: Lipoprotein signal peptidase (154 aa).

Transmembrane regions (helical) follow at residues 55–75 (GHMW…IYIM) and 84–104 (LFSI…IDRV). Residues aspartate 111 and aspartate 129 contribute to the active site. The chain crosses the membrane as a helical span at residues 124-144 (IFNVADAALSVGVVLMLVYVF).

Belongs to the peptidase A8 family.

It is found in the cell membrane. The catalysed reaction is Release of signal peptides from bacterial membrane prolipoproteins. Hydrolyzes -Xaa-Yaa-Zaa-|-(S,diacylglyceryl)Cys-, in which Xaa is hydrophobic (preferably Leu), and Yaa (Ala or Ser) and Zaa (Gly or Ala) have small, neutral side chains.. Its pathway is protein modification; lipoprotein biosynthesis (signal peptide cleavage). Functionally, this protein specifically catalyzes the removal of signal peptides from prolipoproteins. The sequence is that of Lipoprotein signal peptidase from Listeria monocytogenes serotype 4b (strain CLIP80459).